The primary structure comprises 326 residues: UDP-N-acetylglucosamine transporter (326 aa).

8 consecutive transmembrane segments (helical) span residues 4 to 24 (NLKY…VLTM), 38 to 58 (LSST…IFLV), 136 to 156 (LGVY…FVQW), 174 to 194 (FVGL…GVYF), 212 to 232 (LGFF…GELV), 243 to 263 (QLTW…AAVI), 269 to 289 (ILKG…SYFW), and 293 to 313 (FVPT…TFLY).

This sequence belongs to the nucleotide-sugar transporter family. SLC35A subfamily. Interacts with SLC35A2; the interaction is reduced in the presence of SLC35A4. Found in a complex with SLC35A2 and SLC35A4. Interacts with MGAT4B. O-Glcnacylation regulates the stability of SLC35A3 and the specific complex formation with MGAT4B.

Its subcellular location is the golgi apparatus membrane. It catalyses the reaction UMP(out) + UDP-N-acetyl-alpha-D-glucosamine(in) = UMP(in) + UDP-N-acetyl-alpha-D-glucosamine(out). In terms of biological role, transports diphosphate-N-acetylglucosamine (UDP-GlcNAc) from the cytosol into the lumen of the Golgi apparatus, functioning as an antiporter that exchanges UDP-N-acetyl-alpha-D-glucosamine for UMP. May supply UDP-GlcNAc as substrate for Golgi-resident glycosyltransferases that generate highly branched, multiantennary complex N-glycans and keratan sulfate. However, the exact role of SLC35A3 still needs to be elucidated, it could be a member of a catalytically more efficient multiprotein complex rather than function independently as a single transporter. The protein is UDP-N-acetylglucosamine transporter (Slc35a3) of Mus musculus (Mouse).